Here is a 298-residue protein sequence, read N- to C-terminus: N-acetylmuramic acid 6-phosphate etherase (298 aa).

Positions 55 to 218 (AANRYKKGGR…STGVMIRQGK (164 aa)) constitute an SIS domain. The active-site Proton donor is glutamate 83. Glutamate 114 is an active-site residue.

Belongs to the GCKR-like family. MurNAc-6-P etherase subfamily. As to quaternary structure, homodimer.

The enzyme catalyses N-acetyl-D-muramate 6-phosphate + H2O = N-acetyl-D-glucosamine 6-phosphate + (R)-lactate. It functions in the pathway amino-sugar metabolism; N-acetylmuramate degradation. In terms of biological role, specifically catalyzes the cleavage of the D-lactyl ether substituent of MurNAc 6-phosphate, producing GlcNAc 6-phosphate and D-lactate. This is N-acetylmuramic acid 6-phosphate etherase from Lactobacillus acidophilus (strain ATCC 700396 / NCK56 / N2 / NCFM).